Reading from the N-terminus, the 402-residue chain is MAT+ sexual cell fertilization-promoting factor (402 aa).

The segment at residues 169 to 237 (IPRPPNAYIL…KLMSAHPHYR (69 aa)) is a DNA-binding region (HMG box). The segment at 246-272 (IRRRAPRRNRAQEVANASPIGENSGAP) is disordered.

The protein resides in the nucleus. In terms of biological role, controls fertilization, probably by determining the mating type. This chain is MAT+ sexual cell fertilization-promoting factor (FPR1), found in Podospora anserina (Pleurage anserina).